A 204-amino-acid chain; its full sequence is ATP-dependent Clp protease proteolytic subunit (204 aa).

Serine 101 functions as the Nucleophile in the catalytic mechanism. Residue histidine 126 is part of the active site.

This sequence belongs to the peptidase S14 family. As to quaternary structure, fourteen ClpP subunits assemble into 2 heptameric rings which stack back to back to give a disk-like structure with a central cavity, resembling the structure of eukaryotic proteasomes.

The protein localises to the cytoplasm. The enzyme catalyses Hydrolysis of proteins to small peptides in the presence of ATP and magnesium. alpha-casein is the usual test substrate. In the absence of ATP, only oligopeptides shorter than five residues are hydrolyzed (such as succinyl-Leu-Tyr-|-NHMec, and Leu-Tyr-Leu-|-Tyr-Trp, in which cleavage of the -Tyr-|-Leu- and -Tyr-|-Trp bonds also occurs).. Cleaves peptides in various proteins in a process that requires ATP hydrolysis. Has a chymotrypsin-like activity. Plays a major role in the degradation of misfolded proteins. This chain is ATP-dependent Clp protease proteolytic subunit, found in Deinococcus radiodurans (strain ATCC 13939 / DSM 20539 / JCM 16871 / CCUG 27074 / LMG 4051 / NBRC 15346 / NCIMB 9279 / VKM B-1422 / R1).